Consider the following 180-residue polypeptide: MAEQVTEATASGVFCSRILNMVNSEDVNAIILAQRHMLDRFEKTNEMLLNFNGLSNTRLQQMSDRFAHHTRTLVEMKKDLDIIFRRIRMLKGKLAKQYPESFNNVHESPILEDDDDFDPTPRSAATTIATSEQSTESCDTSPSIISPAMSQDFEDLSQAPSDTPSVNGQILTDEEVVHED.

Polar residues-rich tracts occupy residues 126–144 and 158–170; these read TTIATSEQSTESCDTSPSI and QAPSDTPSVNGQI. Residues 126 to 180 form a disordered region; it reads TTIATSEQSTESCDTSPSIISPAMSQDFEDLSQAPSDTPSVNGQILTDEEVVHED.

It belongs to the KXD1 family. Associates with the BLOC-1 complex.

The protein resides in the lysosome membrane. As part of a BORC-like complex may play a role in lysosomes movement and localization at the cell periphery. Associated with the cytosolic face of lysosomes, this complex may couple lysosomes to microtubule plus-end-directed kinesin motor. May also be involved in the biogenesis of lysosome-related organelles such as melanosomes. The polypeptide is KxDL motif-containing protein 1 (kxd1) (Xenopus tropicalis (Western clawed frog)).